A 131-amino-acid polypeptide reads, in one-letter code: MRHYEIVFMVHPDQSEQVPGMIERYKTAITNANGQIHRLEDWGRRQLAYPINKLHKAHYVLMNVEAPQEVIDELETTFRFNDAVLRNMIMRTKHAVTEASPMVKAKDERRRDVAEDLDEEEVDDVAEDSEE.

Residues 97–131 (TEASPMVKAKDERRRDVAEDLDEEEVDDVAEDSEE) are disordered. Residues 104-114 (KAKDERRRDVA) show a composition bias toward basic and acidic residues. Residues 115 to 131 (EDLDEEEVDDVAEDSEE) show a composition bias toward acidic residues.

The protein belongs to the bacterial ribosomal protein bS6 family.

Functionally, binds together with bS18 to 16S ribosomal RNA. The polypeptide is Small ribosomal subunit protein bS6 (Proteus mirabilis (strain HI4320)).